The sequence spans 392 residues: NAD(P)H-quinone oxidoreductase subunit H (392 aa).

It belongs to the complex I 49 kDa subunit family. NDH-1 can be composed of about 15 different subunits; different subcomplexes with different compositions have been identified which probably have different functions.

It is found in the cellular thylakoid membrane. It carries out the reaction a plastoquinone + NADH + (n+1) H(+)(in) = a plastoquinol + NAD(+) + n H(+)(out). The catalysed reaction is a plastoquinone + NADPH + (n+1) H(+)(in) = a plastoquinol + NADP(+) + n H(+)(out). NDH-1 shuttles electrons from an unknown electron donor, via FMN and iron-sulfur (Fe-S) centers, to quinones in the respiratory and/or the photosynthetic chain. The immediate electron acceptor for the enzyme in this species is believed to be plastoquinone. Couples the redox reaction to proton translocation, and thus conserves the redox energy in a proton gradient. Cyanobacterial NDH-1 also plays a role in inorganic carbon-concentration. The protein is NAD(P)H-quinone oxidoreductase subunit H of Synechococcus sp. (strain JA-2-3B'a(2-13)) (Cyanobacteria bacterium Yellowstone B-Prime).